Here is an 87-residue protein sequence, read N- to C-terminus: Long neurotoxin homolog (87 aa).

The N-terminal stretch at 1–21 (MKTLLLTLVVVTIVCLDLGYT) is a signal peptide. Intrachain disulfides connect Cys-24–Cys-47, Cys-27–Cys-32, Cys-40–Cys-64, Cys-68–Cys-80, and Cys-81–Cys-86.

As to expression, expressed by the venom gland.

It is found in the secreted. In terms of biological role, inhibits carbachol-induced muscle contraction in a reversible manner. The polypeptide is Long neurotoxin homolog (Bungarus multicinctus (Many-banded krait)).